A 161-amino-acid polypeptide reads, in one-letter code: Large ribosomal subunit protein uL15 (161 aa).

The tract at residues 1 to 43 is disordered; it reads MKLSEISDNPGARKKRMRIGRGIGSGKGKTGGRGGKGQTARSG. Positions 21 to 37 are enriched in gly residues; the sequence is RGIGSGKGKTGGRGGKG.

It belongs to the universal ribosomal protein uL15 family. In terms of assembly, part of the 50S ribosomal subunit.

In terms of biological role, binds to the 23S rRNA. This is Large ribosomal subunit protein uL15 from Rhodopseudomonas palustris (strain BisB5).